The primary structure comprises 206 residues: Peptidyl-tRNA hydrolase (206 aa).

Y19 contacts tRNA. H24 acts as the Proton acceptor in catalysis. TRNA-binding residues include F70, N72, and N118.

The protein belongs to the PTH family. In terms of assembly, monomer.

It localises to the cytoplasm. It carries out the reaction an N-acyl-L-alpha-aminoacyl-tRNA + H2O = an N-acyl-L-amino acid + a tRNA + H(+). In terms of biological role, hydrolyzes ribosome-free peptidyl-tRNAs (with 1 or more amino acids incorporated), which drop off the ribosome during protein synthesis, or as a result of ribosome stalling. Its function is as follows. Catalyzes the release of premature peptidyl moieties from peptidyl-tRNA molecules trapped in stalled 50S ribosomal subunits, and thus maintains levels of free tRNAs and 50S ribosomes. This chain is Peptidyl-tRNA hydrolase, found in Synechococcus sp. (strain CC9902).